Consider the following 164-residue polypeptide: Protein-export protein SecB (164 aa).

A compositionally biased stretch (basic and acidic residues) spans 1–12 (MPDKDEITHDAQ). The disordered stretch occupies residues 1–22 (MPDKDEITHDAQSENEESLPLA).

Belongs to the SecB family. In terms of assembly, homotetramer, a dimer of dimers. One homotetramer interacts with 1 SecA dimer.

The protein localises to the cytoplasm. One of the proteins required for the normal export of preproteins out of the cell cytoplasm. It is a molecular chaperone that binds to a subset of precursor proteins, maintaining them in a translocation-competent state. It also specifically binds to its receptor SecA. In Neorickettsia sennetsu (strain ATCC VR-367 / Miyayama) (Ehrlichia sennetsu), this protein is Protein-export protein SecB.